Here is a 426-residue protein sequence, read N- to C-terminus: Glutamate-1-semialdehyde 2,1-aminomutase (426 aa).

Lys-265 bears the N6-(pyridoxal phosphate)lysine mark.

The protein belongs to the class-III pyridoxal-phosphate-dependent aminotransferase family. HemL subfamily. Homodimer. Pyridoxal 5'-phosphate serves as cofactor.

The protein resides in the cytoplasm. It catalyses the reaction (S)-4-amino-5-oxopentanoate = 5-aminolevulinate. Its pathway is porphyrin-containing compound metabolism; protoporphyrin-IX biosynthesis; 5-aminolevulinate from L-glutamyl-tRNA(Glu): step 2/2. This chain is Glutamate-1-semialdehyde 2,1-aminomutase, found in Erwinia tasmaniensis (strain DSM 17950 / CFBP 7177 / CIP 109463 / NCPPB 4357 / Et1/99).